The primary structure comprises 331 residues: Neurogenic differentiation factor 4 (331 aa).

The segment at 1 to 80 (MSKTFVKSKE…GPKKKKMTKA (80 aa)) is disordered. A compositionally biased stretch (acidic residues) spans 52-64 (DSIEEEEEEEEDG). Residues 67-79 (PKRRGPKKKKMTK) are compositionally biased toward basic residues. In terms of domain architecture, bHLH spans 87–139 (ARRVKANARERTRMHGLNDALDNLRRVMPCYSKTQKLSKIETLRLARNYIWAL). Residues 246-265 (TPPYEGPLTPPLSISGNFSL) are disordered.

In terms of assembly, efficient DNA binding requires dimerization with another bHLH protein. Serine or threonine phosphorylation within the basic region may regulate neurogenic activity.

Its subcellular location is the nucleus. Functionally, probably acts as a transcriptional activator. Mediates neuronal differentiation. Required for the regulation of amacrine cell fate specification in the retina. The sequence is that of Neurogenic differentiation factor 4 (NEUROD4) from Homo sapiens (Human).